We begin with the raw amino-acid sequence, 412 residues long: Probable serine/threonine-protein kinase PBL4 (412 aa).

Residue glycine 2 is the site of N-myristoyl glycine attachment. A lipid anchor (S-palmitoyl cysteine) is attached at cysteine 4. A disordered region spans residues 14–40 (RESPYRGSSRISAKRSQSSRLSSLTIQ). Positions 21 to 40 (SSRISAKRSQSSRLSSLTIQ) are enriched in low complexity. Threonine 72 is subject to Phosphothreonine. One can recognise a Protein kinase domain in the interval 83–369 (FRPDSVIGEG…STLEELEMTL (287 aa)). ATP-binding positions include 89–97 (IGEGGFGYV) and lysine 121. Tyrosine 167 carries the post-translational modification Phosphotyrosine. The active-site Proton acceptor is aspartate 215. Serine 219 and serine 249 each carry phosphoserine. Residues threonine 250 and threonine 255 each carry the phosphothreonine modification. Position 263 is a phosphotyrosine (tyrosine 263).

The protein belongs to the protein kinase superfamily. Ser/Thr protein kinase family.

It localises to the cell membrane. The catalysed reaction is L-seryl-[protein] + ATP = O-phospho-L-seryl-[protein] + ADP + H(+). The enzyme catalyses L-threonyl-[protein] + ATP = O-phospho-L-threonyl-[protein] + ADP + H(+). May be involved in plant defense signaling. This Arabidopsis thaliana (Mouse-ear cress) protein is Probable serine/threonine-protein kinase PBL4.